We begin with the raw amino-acid sequence, 306 residues long: MRIAFMGTPPFAVPTLAALHTAGHDIAAVYSQPPRPAQRGKKLQKSPVQLWAEEHGLPVRTPKSLKSDEAQAEFAALDLDVAVVAAYGLILPQAVLDAPREGCLNVHGSILPRWRGAAPVQRAILAGDAETGVTIMQMDAGLDTGAMRLIETTPVARKSAGLLTHELAEMGALMMRRVLSELHAFPPVPQPDEGVTYAAKIDKSEARLDFLVSAVQVERQVRAFNPAPGAFFELEGERYKVLAAEVVHPAETVAGAAPGVTIDDRLAIACNPGAIRVTRIQRAGKPAMEAGEMLRGRGIAKGTRLA.

Position 109-112 (109-112 (SILP)) interacts with (6S)-5,6,7,8-tetrahydrofolate.

This sequence belongs to the Fmt family.

The catalysed reaction is L-methionyl-tRNA(fMet) + (6R)-10-formyltetrahydrofolate = N-formyl-L-methionyl-tRNA(fMet) + (6S)-5,6,7,8-tetrahydrofolate + H(+). Functionally, attaches a formyl group to the free amino group of methionyl-tRNA(fMet). The formyl group appears to play a dual role in the initiator identity of N-formylmethionyl-tRNA by promoting its recognition by IF2 and preventing the misappropriation of this tRNA by the elongation apparatus. The chain is Methionyl-tRNA formyltransferase from Sphingopyxis alaskensis (strain DSM 13593 / LMG 18877 / RB2256) (Sphingomonas alaskensis).